A 571-amino-acid chain; its full sequence is Peptide-N4-(N-acetyl-beta-glucosaminyl)asparagine amidase A (571 aa).

N-linked (GlcNAc...) asparagine glycans are attached at residues asparagine 121, asparagine 143, asparagine 197, asparagine 241, asparagine 318, asparagine 367, asparagine 390, asparagine 423, asparagine 457, asparagine 481, asparagine 524, and asparagine 529.

As to quaternary structure, heterodimer of a large and a small chain. Post-translationally, is highly glycosylated and is largly resistant against self-deglycosylation.

It catalyses the reaction Hydrolysis of an N(4)-(acetyl-beta-D-glucosaminyl)asparagine residue in which the glucosamine residue may be further glycosylated, to yield a (substituted) N-acetyl-beta-D-glucosaminylamine and a peptide containing an aspartate residue.. This Prunus dulcis (Almond) protein is Peptide-N4-(N-acetyl-beta-glucosaminyl)asparagine amidase A.